The following is a 454-amino-acid chain: Allantoinase (454 aa).

Zn(2+) contacts are provided by His-59, His-61, Lys-150, His-190, His-246, and Asp-319. N6-carboxylysine is present on Lys-150.

The protein belongs to the metallo-dependent hydrolases superfamily. Allantoinase family. As to quaternary structure, homotetramer. Zn(2+) serves as cofactor. In terms of processing, carboxylation allows a single lysine to coordinate two zinc ions.

The enzyme catalyses (S)-allantoin + H2O = allantoate + H(+). It functions in the pathway nitrogen metabolism; (S)-allantoin degradation; allantoate from (S)-allantoin: step 1/1. Catalyzes the conversion of allantoin (5-ureidohydantoin) to allantoic acid by hydrolytic cleavage of the five-member hydantoin ring. This Bacillus licheniformis (strain ATCC 14580 / DSM 13 / JCM 2505 / CCUG 7422 / NBRC 12200 / NCIMB 9375 / NCTC 10341 / NRRL NRS-1264 / Gibson 46) protein is Allantoinase.